We begin with the raw amino-acid sequence, 117 residues long: Large ribosomal subunit protein uL18 (117 aa).

The protein belongs to the universal ribosomal protein uL18 family. In terms of assembly, part of the 50S ribosomal subunit; part of the 5S rRNA/L5/L18/L25 subcomplex. Contacts the 5S and 23S rRNAs.

This is one of the proteins that bind and probably mediate the attachment of the 5S RNA into the large ribosomal subunit, where it forms part of the central protuberance. The polypeptide is Large ribosomal subunit protein uL18 (Sphingopyxis alaskensis (strain DSM 13593 / LMG 18877 / RB2256) (Sphingomonas alaskensis)).